The sequence spans 294 residues: uncharacterized protein (294 aa).

The protein resides in the mitochondrion. This is an uncharacterized protein from Zea mays (Maize).